We begin with the raw amino-acid sequence, 364 residues long: uncharacterized protein (364 aa).

This is an uncharacterized protein from Acanthamoeba polyphaga mimivirus (APMV).